A 292-amino-acid polypeptide reads, in one-letter code: Nitrogenase iron protein 1 (292 aa).

Residue 12–19 (GKGGIGKS) coordinates ATP. Residue Cys101 participates in [4Fe-4S] cluster binding. Position 104 is an ADP-ribosylarginine; by dinitrogenase reductase ADP-ribosyltransferase (Arg104). Cys135 serves as a coordination point for [4Fe-4S] cluster.

Belongs to the NifH/BchL/ChlL family. Homodimer. The cofactor is [4Fe-4S] cluster. Post-translationally, the reversible ADP-ribosylation of Arg-104 inactivates the nitrogenase reductase and regulates nitrogenase activity.

The catalysed reaction is N2 + 8 reduced [2Fe-2S]-[ferredoxin] + 16 ATP + 16 H2O = H2 + 8 oxidized [2Fe-2S]-[ferredoxin] + 2 NH4(+) + 16 ADP + 16 phosphate + 6 H(+). In terms of biological role, the key enzymatic reactions in nitrogen fixation are catalyzed by the nitrogenase complex, which has 2 components: the iron protein and the molybdenum-iron protein. This chain is Nitrogenase iron protein 1 (nifH1), found in Paenibacillus durus (Paenibacillus azotofixans).